The chain runs to 156 residues: Endogenous retrovirus group K member 104 Pro protein (156 aa).

Residues 21–96 form the Peptidase A2 domain; sequence FEGLVDTEAD…IPLNLWGQDL (76 aa). Asp26 is an active-site residue. The region spanning 111-156 is the G-patch domain; that stretch reads YSPTSQKIMTKMGYIPGKGLGKNEDGIKVPVEAKINQKREGIGYPF.

The protein belongs to the peptidase A2 family. HERV class-II K(HML-2) subfamily. In terms of assembly, active as a homodimer. In terms of processing, autoproteolytically processed at the N-terminus. Expected C-terminal autoprocessing not detected. The sequence shown is that of the processed Pro protein.

It catalyses the reaction Processing at the authentic HIV-1 PR recognition site and release of the mature p17 matrix and the p24 capsid protein, as a result of the cleavage of the -SQNY-|-PIVQ- cleavage site.. Functionally, retroviral proteases have roles in the processing of the primary translation products and the maturation of the viral particle. Endogenous Pro proteins may have kept, lost or modified their original function during evolution. In Homo sapiens (Human), this protein is Endogenous retrovirus group K member 104 Pro protein (HERV-K104).